We begin with the raw amino-acid sequence, 327 residues long: MESGSFPVINMELLQGSQRPAAMALLRDACENWGLYELLNHGISHELMNRVETVNKEHYRRFREQRFKEFASKTLDTVENVEPENLDWESTFFLRHLPTSNISQIPDLDDDCRSTMKEFALELENLAERLLDLLCEDLGLEKGYLKKVFCGGSDGLPTFGTKVSNYPPCPKPELIKGLRAHTDAGGIILLFQDDKVSGLQLLKDGEWIDVPPVRHSIVVNIGDQLEVITNGKYKSVLHRVVAQTDGNRMSIASFYNPGSDAVIFPAPALVEKEAEEKEEKKKEIYPKFVFQDYMNLYIRKKFEAKEPRFEAMKSMEIVMSSQPIPTA.

One can recognise a Fe2OG dioxygenase domain in the interval 157-257 (PTFGTKVSNY…RMSIASFYNP (101 aa)). 3 residues coordinate Fe cation: His-181, Asp-183, and His-238.

The protein belongs to the iron/ascorbate-dependent oxidoreductase family. Requires Fe cation as cofactor.

The catalysed reaction is 1-aminocyclopropane-1-carboxylate + L-ascorbate + O2 = ethene + L-dehydroascorbate + hydrogen cyanide + CO2 + 2 H2O. Its pathway is alkene biosynthesis; ethylene biosynthesis via S-adenosyl-L-methionine; ethylene from S-adenosyl-L-methionine: step 2/2. The polypeptide is 1-aminocyclopropane-1-carboxylate oxidase 1 (ACO1) (Doritaenopsis sp. (Moth orchid)).